The following is a 160-amino-acid chain: tRNA (cytidine(34)-2'-O)-methyltransferase (160 aa).

The S-adenosyl-L-methionine site is built by Leu-78, Gly-100, Ile-120, and Ser-128.

This sequence belongs to the class IV-like SAM-binding methyltransferase superfamily. RNA methyltransferase TrmH family. TrmL subfamily. In terms of assembly, homodimer.

Its subcellular location is the cytoplasm. It catalyses the reaction cytidine(34) in tRNA + S-adenosyl-L-methionine = 2'-O-methylcytidine(34) in tRNA + S-adenosyl-L-homocysteine + H(+). The enzyme catalyses 5-carboxymethylaminomethyluridine(34) in tRNA(Leu) + S-adenosyl-L-methionine = 5-carboxymethylaminomethyl-2'-O-methyluridine(34) in tRNA(Leu) + S-adenosyl-L-homocysteine + H(+). In terms of biological role, methylates the ribose at the nucleotide 34 wobble position in the two leucyl isoacceptors tRNA(Leu)(CmAA) and tRNA(Leu)(cmnm5UmAA). Catalyzes the methyl transfer from S-adenosyl-L-methionine to the 2'-OH of the wobble nucleotide. This chain is tRNA (cytidine(34)-2'-O)-methyltransferase, found in Beijerinckia indica subsp. indica (strain ATCC 9039 / DSM 1715 / NCIMB 8712).